Here is a 193-residue protein sequence, read N- to C-terminus: Peptidyl-tRNA hydrolase (193 aa).

Residue Tyr-16 participates in tRNA binding. His-21 serves as the catalytic Proton acceptor. The tRNA site is built by Phe-67, Asn-69, and Asn-115.

This sequence belongs to the PTH family. As to quaternary structure, monomer.

It is found in the cytoplasm. The enzyme catalyses an N-acyl-L-alpha-aminoacyl-tRNA + H2O = an N-acyl-L-amino acid + a tRNA + H(+). Hydrolyzes ribosome-free peptidyl-tRNAs (with 1 or more amino acids incorporated), which drop off the ribosome during protein synthesis, or as a result of ribosome stalling. Its function is as follows. Catalyzes the release of premature peptidyl moieties from peptidyl-tRNA molecules trapped in stalled 50S ribosomal subunits, and thus maintains levels of free tRNAs and 50S ribosomes. This is Peptidyl-tRNA hydrolase from Baumannia cicadellinicola subsp. Homalodisca coagulata.